A 133-amino-acid chain; its full sequence is ATP synthase epsilon chain, chloroplastic (133 aa).

It belongs to the ATPase epsilon chain family. F-type ATPases have 2 components, CF(1) - the catalytic core - and CF(0) - the membrane proton channel. CF(1) has five subunits: alpha(3), beta(3), gamma(1), delta(1), epsilon(1). CF(0) has three main subunits: a, b and c.

It is found in the plastid. It localises to the chloroplast thylakoid membrane. Functionally, produces ATP from ADP in the presence of a proton gradient across the membrane. The chain is ATP synthase epsilon chain, chloroplastic from Zygnema circumcarinatum (Green alga).